The primary structure comprises 178 residues: Cell division protein ZapC (178 aa).

This sequence belongs to the ZapC family. As to quaternary structure, interacts directly with FtsZ.

The protein localises to the cytoplasm. Its function is as follows. Contributes to the efficiency of the cell division process by stabilizing the polymeric form of the cell division protein FtsZ. Acts by promoting interactions between FtsZ protofilaments and suppressing the GTPase activity of FtsZ. In Aeromonas hydrophila subsp. hydrophila (strain ATCC 7966 / DSM 30187 / BCRC 13018 / CCUG 14551 / JCM 1027 / KCTC 2358 / NCIMB 9240 / NCTC 8049), this protein is Cell division protein ZapC.